A 477-amino-acid polypeptide reads, in one-letter code: UDP-N-acetylmuramate--L-alanine ligase (477 aa).

122–128 (GTHGKTT) contributes to the ATP binding site.

The protein belongs to the MurCDEF family.

The protein resides in the cytoplasm. It catalyses the reaction UDP-N-acetyl-alpha-D-muramate + L-alanine + ATP = UDP-N-acetyl-alpha-D-muramoyl-L-alanine + ADP + phosphate + H(+). Its pathway is cell wall biogenesis; peptidoglycan biosynthesis. Its function is as follows. Cell wall formation. In Xanthomonas campestris pv. campestris (strain 8004), this protein is UDP-N-acetylmuramate--L-alanine ligase.